We begin with the raw amino-acid sequence, 549 residues long: Chaperonin GroEL 3 (549 aa).

ATP is bound by residues T29 to P32, D86 to T90, G414, N477 to A479, and D493.

It belongs to the chaperonin (HSP60) family. As to quaternary structure, forms a cylinder of 14 subunits composed of two heptameric rings stacked back-to-back. Interacts with the co-chaperonin GroES.

The protein localises to the cytoplasm. It carries out the reaction ATP + H2O + a folded polypeptide = ADP + phosphate + an unfolded polypeptide.. Functionally, together with its co-chaperonin GroES, plays an essential role in assisting protein folding. The GroEL-GroES system forms a nano-cage that allows encapsulation of the non-native substrate proteins and provides a physical environment optimized to promote and accelerate protein folding. This is Chaperonin GroEL 3 from Frankia casuarinae (strain DSM 45818 / CECT 9043 / HFP020203 / CcI3).